The primary structure comprises 757 residues: Large ribosomal subunit protein mL102 (rPPR5) (757 aa).

Residues 39 to 55 are compositionally biased toward polar residues; the sequence is EETQTPANANPETQSPD. The interval 39-82 is disordered; that stretch reads EETQTPANANPETQSPDAKSETKKNLTSTETRPLRERFQRGKRQ. Residues 70-82 show a composition bias toward basic and acidic residues; the sequence is RPLRERFQRGKRQ. PPR repeat units lie at residues 149 to 183, 184 to 218, 219 to 253, 254 to 288, 289 to 323, 324 to 358, 359 to 393, 395 to 429, 430 to 464, 473 to 507, 510 to 541, 542 to 576, 577 to 611, 614 to 648, 651 to 680, and 681 to 715; these read DRDT…GVPW, DEDM…GVER, TIKS…GVEP, TRHT…GISP, DDAT…KIGP, SVVS…GIEP, NATT…HIAP, DNSI…NVPA, EAGH…EIIL, EPSA…GVQD, ALNN…GVPR, ESNA…GHVP, DSSL…NVGI, NMDL…GHTA, DSLL…DLSL, and EFSS…GSST.

Belongs to the PPR family. P subfamily. Component of the mitochondrial ribosome large subunit.

It localises to the mitochondrion. The protein is Large ribosomal subunit protein mL102 (rPPR5) of Arabidopsis thaliana (Mouse-ear cress).